The primary structure comprises 1102 residues: MEHEQDDPGTSTNVGVDSSVDDSMASLSICDSEHPNIYRQDIVKNKKTGSVGVVSEVAGDSDSDSDISDEEEDDDDDEDNDDDDEDVEEGKKASEENVVNGDGEKKADGNYKCGALEGDQIRVLWMDNTEPVQDINDVTVIDRGFLHGDYVASASEPTGQVGVVVDVNISVDLLAPDGSIHKDISTKNLKRVRDFAVGDYVVHGPWLGRIDDVLDNVTVLFDDGSMCKVLRVEPLRLKPIPKNNLEEDANFPYYPGQRVKASSSSVFKNSRWLSGLWKPNRLEGTVTKVTAGSIFVYWIASAGFGPDSSVSPPEEQNPSNLTLLSCFTHANWQVGDWCLLPSLNQSATIPLHKHVSKLRLYDSQADRQQKIGRDLEDVQDEVSGKVEPAGITAEALPKVTSDDPPQRNPSVSKEPVHEPWPLHRKKIRKLVIRKDKKVKKKEESFEQALLVVNSRTRVDVSWQDGTIECRREAITLIPIETPGDHEFVSEQYVVEKTSDDGDNTTEPRRAGVVKNVNAKDRTASVRWLNPLRRAEEPREFEKEEIVSVYELEGHPDYDYCYGDVVVRLSPIAVALPASSPGNSFEEATQQDNGYQDSESHQEAKILVDKEENEPSTDLSKLSWVGNITGLKDGDIEVTWADGTISTVGPHAVYVVGRDDDDESVAGESETSDAASWETLNDDDRGAPEIPEEDLGRSSSIEGNSDADIYAENDSGRNGALALPLAAIEFVTRLASGIFSRARKSVDSSSSDYTVENVYKQAESTNPSDETDSLDDPSPSKVNVTDNCESKGTQANAKNILSGETSTFLEDEDKPVPSEGDSCSFRRFDISQDPLDHHFLGVDGQKTKERQWFKKVDQDWKILQNNLPDGIFVRAYEDRMDLLRAVIVGAFGTPYQDGLFFFDFHLPSDYPSVPPSAYYHSGGWRLNPNLYEEGKVCLSLLNTWTGRGNEVWDPKSSSILQVLVSLQGLVLNSKPYFNEAGYDKQVGTAEGEKNSLGYNENTFLLNCKTMMYLMRKPPKDFEELIKDHFRKRGYYILKACDAYMKGYLIGSLTKDASVIDERSSANSTSVGFKLMLAKIAPKLFSALSEVGADCNEFQHLQQQ.

Disordered stretches follow at residues 1–20 (MEHE…DSSV), 25–111 (ASLS…DGNY), 396–418 (LPKV…PVHE), 579–602 (SPGN…SHQE), 661–710 (DESV…DIYA), and 760–800 (QAES…KNIL). Residues 31-44 (DSEHPNIYRQDIVK) are compositionally biased toward basic and acidic residues. A compositionally biased stretch (acidic residues) spans 59–88 (GDSDSDSDISDEEEDDDDDEDNDDDDEDVE). Residues 579 to 596 (SPGNSFEEATQQDNGYQD) show a composition bias toward polar residues. Over residues 779–800 (SKVNVTDNCESKGTQANAKNIL) the composition is skewed to polar residues. One can recognise a UBC core domain in the interval 850-1010 (QWFKKVDQDW…TFLLNCKTMM (161 aa)). The active-site Glycyl thioester intermediate is the cysteine 936.

It belongs to the ubiquitin-conjugating enzyme family.

It carries out the reaction S-ubiquitinyl-[E1 ubiquitin-activating enzyme]-L-cysteine + [E2 ubiquitin-conjugating enzyme]-L-cysteine = [E1 ubiquitin-activating enzyme]-L-cysteine + S-ubiquitinyl-[E2 ubiquitin-conjugating enzyme]-L-cysteine.. It functions in the pathway protein modification; protein ubiquitination. Its function is as follows. Accepts the ubiquitin from the E1 complex and catalyzes its covalent attachment to other proteins. The chain is Probable ubiquitin-conjugating enzyme E2 23 (UBC23) from Arabidopsis thaliana (Mouse-ear cress).